A 63-amino-acid chain; its full sequence is Large ribosomal subunit protein uL30 (63 aa).

This sequence belongs to the universal ribosomal protein uL30 family. As to quaternary structure, part of the 50S ribosomal subunit.

The sequence is that of Large ribosomal subunit protein uL30 from Xanthomonas campestris pv. campestris (strain 8004).